The sequence spans 317 residues: Aspartate carbamoyltransferase catalytic subunit (317 aa).

Arg-55 and Thr-56 together coordinate carbamoyl phosphate. Lys-83 serves as a coordination point for L-aspartate. Residues Arg-105, His-138, and Gln-141 each coordinate carbamoyl phosphate. Arg-171 and Arg-225 together coordinate L-aspartate. Gly-266 and Pro-267 together coordinate carbamoyl phosphate.

Belongs to the aspartate/ornithine carbamoyltransferase superfamily. ATCase family. As to quaternary structure, heterododecamer (2C3:3R2) of six catalytic PyrB chains organized as two trimers (C3), and six regulatory PyrI chains organized as three dimers (R2).

It catalyses the reaction carbamoyl phosphate + L-aspartate = N-carbamoyl-L-aspartate + phosphate + H(+). It functions in the pathway pyrimidine metabolism; UMP biosynthesis via de novo pathway; (S)-dihydroorotate from bicarbonate: step 2/3. Its function is as follows. Catalyzes the condensation of carbamoyl phosphate and aspartate to form carbamoyl aspartate and inorganic phosphate, the committed step in the de novo pyrimidine nucleotide biosynthesis pathway. This is Aspartate carbamoyltransferase catalytic subunit from Mycobacteroides abscessus (strain ATCC 19977 / DSM 44196 / CCUG 20993 / CIP 104536 / JCM 13569 / NCTC 13031 / TMC 1543 / L948) (Mycobacterium abscessus).